The primary structure comprises 410 residues: UDP-N-acetylglucosamine--N-acetylmuramyl-(pentapeptide) pyrophosphoryl-undecaprenol N-acetylglucosamine transferase (410 aa).

A disordered region spans residues 1 to 35 (MKDTVSQPAGGRGATAPRPADAASPSCGSSPSADS). Over residues 14–35 (ATAPRPADAASPSCGSSPSADS) the composition is skewed to low complexity. Residues 45-47 (TAG), Asn-167, Arg-204, Ser-238, and Gln-334 contribute to the UDP-N-acetyl-alpha-D-glucosamine site.

The protein belongs to the glycosyltransferase 28 family. MurG subfamily.

It is found in the cell membrane. It carries out the reaction di-trans,octa-cis-undecaprenyl diphospho-N-acetyl-alpha-D-muramoyl-L-alanyl-D-glutamyl-meso-2,6-diaminopimeloyl-D-alanyl-D-alanine + UDP-N-acetyl-alpha-D-glucosamine = di-trans,octa-cis-undecaprenyl diphospho-[N-acetyl-alpha-D-glucosaminyl-(1-&gt;4)]-N-acetyl-alpha-D-muramoyl-L-alanyl-D-glutamyl-meso-2,6-diaminopimeloyl-D-alanyl-D-alanine + UDP + H(+). It functions in the pathway cell wall biogenesis; peptidoglycan biosynthesis. Functionally, cell wall formation. Catalyzes the transfer of a GlcNAc subunit on undecaprenyl-pyrophosphoryl-MurNAc-pentapeptide (lipid intermediate I) to form undecaprenyl-pyrophosphoryl-MurNAc-(pentapeptide)GlcNAc (lipid intermediate II). The protein is UDP-N-acetylglucosamine--N-acetylmuramyl-(pentapeptide) pyrophosphoryl-undecaprenol N-acetylglucosamine transferase of Mycobacterium tuberculosis (strain ATCC 25177 / H37Ra).